The following is a 347-amino-acid chain: MILISDATLRDGNHAIRHQLSAAQIHAYARAADEAGIDVVEVGHGNGLGGSSCLLGQTPISDRLMLETARAALRTSRLGVHFIPGLGKAADISLALEIGVDVVRVATHCTEANVSARFIEQTRAAGRTAFGVLMMSHMAPPDALLAQAKLMERYGAQAVVLMDSAGYSTPSLVRAKVERLVDGLDIDVGFHAHNNLGLAVANSLVALEAGARIVDACVKGFGAGAGNTQLETLVAAMEREGHDTRTTFERVMTLARGTETFLNPKTPHIQPANIASGLYGLFSGYVPHIQKAAQEFGVNEFELYKRLAERKLVAGQEDIIIEEASRLARERDVQRATGGVRVRELSA.

Positions 2-252 constitute a Pyruvate carboxyltransferase domain; sequence ILISDATLRD…DTRTTFERVM (251 aa). Substrate is bound at residue 10–11; the sequence is RD. Residue Asp11 participates in Mn(2+) binding. His14 (proton acceptor) is an active-site residue. The substrate site is built by Ser164 and His191. Residues His191 and His193 each coordinate Mn(2+).

Belongs to the 4-hydroxy-2-oxovalerate aldolase family.

It catalyses the reaction (S)-4-hydroxy-2-oxopentanoate = acetaldehyde + pyruvate. This is 4-hydroxy-2-oxovalerate aldolase (mhpE) from Burkholderia pseudomallei (strain K96243).